The following is a 101-amino-acid chain: Aspartyl/glutamyl-tRNA(Asn/Gln) amidotransferase subunit C (101 aa).

It belongs to the GatC family. In terms of assembly, heterotrimer of A, B and C subunits.

It carries out the reaction L-glutamyl-tRNA(Gln) + L-glutamine + ATP + H2O = L-glutaminyl-tRNA(Gln) + L-glutamate + ADP + phosphate + H(+). The enzyme catalyses L-aspartyl-tRNA(Asn) + L-glutamine + ATP + H2O = L-asparaginyl-tRNA(Asn) + L-glutamate + ADP + phosphate + 2 H(+). Allows the formation of correctly charged Asn-tRNA(Asn) or Gln-tRNA(Gln) through the transamidation of misacylated Asp-tRNA(Asn) or Glu-tRNA(Gln) in organisms which lack either or both of asparaginyl-tRNA or glutaminyl-tRNA synthetases. The reaction takes place in the presence of glutamine and ATP through an activated phospho-Asp-tRNA(Asn) or phospho-Glu-tRNA(Gln). This Salinispora tropica (strain ATCC BAA-916 / DSM 44818 / JCM 13857 / NBRC 105044 / CNB-440) protein is Aspartyl/glutamyl-tRNA(Asn/Gln) amidotransferase subunit C.